The chain runs to 101 residues: Small ribosomal subunit protein uS14 (101 aa).

This sequence belongs to the universal ribosomal protein uS14 family. As to quaternary structure, part of the 30S ribosomal subunit. Contacts proteins S3 and S10.

Binds 16S rRNA, required for the assembly of 30S particles and may also be responsible for determining the conformation of the 16S rRNA at the A site. The sequence is that of Small ribosomal subunit protein uS14 from Chlamydia trachomatis serovar L2 (strain ATCC VR-902B / DSM 19102 / 434/Bu).